The sequence spans 295 residues: Phosphoribosylaminoimidazole-succinocarboxamide synthase (295 aa).

It belongs to the SAICAR synthetase family.

It catalyses the reaction 5-amino-1-(5-phospho-D-ribosyl)imidazole-4-carboxylate + L-aspartate + ATP = (2S)-2-[5-amino-1-(5-phospho-beta-D-ribosyl)imidazole-4-carboxamido]succinate + ADP + phosphate + 2 H(+). The protein operates within purine metabolism; IMP biosynthesis via de novo pathway; 5-amino-1-(5-phospho-D-ribosyl)imidazole-4-carboxamide from 5-amino-1-(5-phospho-D-ribosyl)imidazole-4-carboxylate: step 1/2. The protein is Phosphoribosylaminoimidazole-succinocarboxamide synthase of Desulforapulum autotrophicum (strain ATCC 43914 / DSM 3382 / VKM B-1955 / HRM2) (Desulfobacterium autotrophicum).